The primary structure comprises 148 residues: Globin-3 (148 aa).

Positions 2–148 constitute a Globin domain; that stretch reads TLTKHEQDIL…HVFPMMAAEI (147 aa). Histidine 99 provides a ligand contact to heme.

It belongs to the globin family. Monomer.

In terms of biological role, oxygen binding protein. This Paramphistomum epiclitum protein is Globin-3.